The following is a 580-amino-acid chain: Type 3 secretion system translocon protein SctE (580 aa).

2 consecutive transmembrane segments (helical) span residues 313–333 (ILGALLTIVSVVAAAFSGGAS) and 399–419 (IGSILGAIAGALVLVAAVVLV).

The protein belongs to the SctE/SipB/YopB family. The core secretion machinery of the T3SS is composed of approximately 20 different proteins, including cytoplasmic components, a base, an export apparatus and a needle. This subunit is involved in the formation of a pore, called the translocon, in host membrane.

The protein resides in the secreted. The protein localises to the host membrane. In terms of biological role, component of the type III secretion system (T3SS), also called injectisome, which is used to inject bacterial effector proteins into eukaryotic host cells. IpaB/SctE and IpaC/SctB are inserted into the host membrane where they form a pore and allow the translocation of effector proteins into the cytosol of target cells. This Shigella dysenteriae protein is Type 3 secretion system translocon protein SctE.